The sequence spans 501 residues: Endosomal/lysosomal proton channel TMEM175 (501 aa).

A disordered region spans residues 1–20 (MAAPRAATPGPGGGARKPEL). At 1–31 (MAAPRAATPGPGGGARKPELDLELGSSTQTS) the chain is on the cytoplasmic side. A helical transmembrane segment spans residues 32–54 (HRLLAYSDALLSIIATVMILPVA). Residues 33-39 (RLLAYSD) carry the RxxxFSD motif 1 motif. At 55–75 (HTKIHPDQKLGESVQQLLLTK) the chain is on the lumenal side. Residues 56 to 61 (TKIHPD) form a short helix H1-1 region. Positions 63 to 69 (KLGESVQ) are short helix H2-1. The chain crosses the membrane as a helical span at residues 76–98 (IAVYLMTFLIVTVAWAAHVRLFQ). Residues 99–104 (VIELID) are Cytoplasmic-facing. Residues 105-126 (DVLALLNLACMMIITFLPYTFS) traverse the membrane as a helical segment. Topologically, residues 127–136 (LMASFPGVPF) are lumenal. A helical transmembrane segment spans residues 137 to 158 (GIFLFSVCAVVIGLIQAVIVVY). Over 159 to 182 (GFYHPHLLNQQIQVSENQNFYKRH) the chain is Cytoplasmic. A helical transmembrane segment spans residues 183–203 (ILKIILRGPALCFLAAIFSFF). Residues 204–208 (FIPLS) lie on the Lumenal side of the membrane. A helical transmembrane segment spans residues 209–228 (YLLLGLVIVFPHLSRFITWC). The Cytoplasmic segment spans residues 229 to 257 (KTKIVGHRDEEEASYSLETFSFYLSEPLS). The helical transmembrane segment at 258 to 282 (KERVEAFSDGVYAIVATLLILDICE) threads the bilayer. Positions 260–266 (RVEAFSD) match the RxxxFSD motif 2 motif. At 283–309 (DNVPDPREVGEKFHGSLLEALSEYGPN) the chain is on the lumenal side. Residues 288 to 296 (PREVGEKFH) form a short helix H1-2 region. The short helix H2-2 stretch occupies residues 298–304 (SLLEALS). The helical transmembrane segment at 310–332 (YLAYFGSFVTIGLLWFVHHSLFL) threads the bilayer. Residues 333 to 338 (YVTKAT) are Cytoplasmic-facing. Residues 339–360 (RLMGLLNILSLAFIGGLPLAYQ) traverse the membrane as a helical segment. The Lumenal segment spans residues 361 to 375 (LTSEFAEKSHNEIEA). A helical membrane pass occupies residues 376–396 (IQVSCVITFFASIFQFAIWTT). Over 397 to 416 (ALLHERETLHPFARYGGKEH) the chain is Cytoplasmic. The helical transmembrane segment at 417–440 (AFMFAKLALYPCVSLGAFFLTCLL) threads the bilayer. The Lumenal segment spans residues 441-442 (SE). The helical transmembrane segment at 443–469 (FSTEIFHLMQIVIPFAFLALRIFVRIS) threads the bilayer. Topologically, residues 470–501 (LTVIKSVMSLSRRKVVLLEEEEACLSPTETHS) are cytoplasmic.

Belongs to the TMEM175 family. Homodimer.

It localises to the endosome membrane. Its subcellular location is the lysosome membrane. It catalyses the reaction H(+)(in) = H(+)(out). It carries out the reaction K(+)(in) = K(+)(out). Active at low pH (under pH 4.6): proton channel activity is activated by luminal side protons. Polyunsaturated fatty acids, such as arachidonic acid, also activate the channel activity. In terms of biological role, proton-activated proton channel that catalyzes proton efflux from endosomes and lysosomes to maintain a steady-state pH. Activated at low pH (under pH 4.6) by luminal side protons: selectively mediates lysosomal proton release from lysosomes, eliciting a proton leak that balances V-ATPase activity to maintain pH homeostasis. Regulation of lumenal pH stability is required for autophagosome-lysosome fusion. Also acts as a potassium channel at higher pH, regulating potassium conductance in endosomes and lysosomes. The sequence is that of Endosomal/lysosomal proton channel TMEM175 from Gallus gallus (Chicken).